Here is a 301-residue protein sequence, read N- to C-terminus: Ornithine carbamoyltransferase (301 aa).

Residues Arg-100 and His-127–Gln-130 each bind carbamoyl phosphate. L-ornithine contacts are provided by residues Asn-158, Asp-221, and Ser-225 to Met-226. Carbamoyl phosphate contacts are provided by Cys-260 and Arg-288.

Belongs to the aspartate/ornithine carbamoyltransferase superfamily. OTCase family. In terms of assembly, homododecamer.

The protein localises to the cytoplasm. The enzyme catalyses carbamoyl phosphate + L-ornithine = L-citrulline + phosphate + H(+). It participates in amino-acid biosynthesis; L-arginine biosynthesis; L-arginine from L-ornithine and carbamoyl phosphate: step 1/3. Functionally, reversibly catalyzes the transfer of the carbamoyl group from carbamoyl phosphate (CP) to the N(epsilon) atom of ornithine (ORN) to produce L-citrulline. In Moritella profunda, this protein is Ornithine carbamoyltransferase (argF).